The sequence spans 1023 residues: DNA polymerase (1023 aa).

The segment at 726–751 is disordered; the sequence is QTDATRKHRQCTPTSNSSSDEDAPFY.

Belongs to the DNA polymerase type-B family. In terms of assembly, heterodimer with the terminal protein; this heterodimer binds to bp 9 to 18 of the genome. Forms a complex with viral pTP, DBP and hosts NFIA and POU2F1/OCT1 for initiation of replication.

The protein localises to the host nucleus. It carries out the reaction DNA(n) + a 2'-deoxyribonucleoside 5'-triphosphate = DNA(n+1) + diphosphate. Its function is as follows. Eukaryotic-type DNA polymerase involved in viral genomic replication. DNA synthesis is protein primed, and acts in a strand displacement replication. Assembles in complex with viral pTP, DBP, host NFIA and host POU2F1/OCT1 on viral origin of replication. The polymerase covalently transfers dCMP onto pTP, thereby initiating complementary strand synthesis. The chain is DNA polymerase from Bovine adenovirus B serotype 3 (BAdV-3).